A 229-amino-acid chain; its full sequence is Orotate phosphoribosyltransferase (229 aa).

5-phospho-alpha-D-ribose 1-diphosphate is bound by residues Arg107, Lys108, Lys111, His113, and 133–141 (EDLTTAGGS). Residue Thr137 participates in orotate binding.

The protein belongs to the purine/pyrimidine phosphoribosyltransferase family. PyrE subfamily. In terms of assembly, homodimer. Mg(2+) is required as a cofactor.

It carries out the reaction orotidine 5'-phosphate + diphosphate = orotate + 5-phospho-alpha-D-ribose 1-diphosphate. Its pathway is pyrimidine metabolism; UMP biosynthesis via de novo pathway; UMP from orotate: step 1/2. Catalyzes the transfer of a ribosyl phosphate group from 5-phosphoribose 1-diphosphate to orotate, leading to the formation of orotidine monophosphate (OMP). The sequence is that of Orotate phosphoribosyltransferase from Rhizobium johnstonii (strain DSM 114642 / LMG 32736 / 3841) (Rhizobium leguminosarum bv. viciae).